We begin with the raw amino-acid sequence, 452 residues long: MQRRIMGIETEFGVTCTFHGHRRLSPDEVARYLFRRVVSWGRSSNVFLRNGARLYLDVGSHPEYATAECDNLIQLVTHDRAGERVLEDLLIDAEQRLADEGIGGDIYLFKNNTDSAGNSYGCHENYLIVRAGEFSRISDVLLPFLVTRQLICGAGKVLQTPKAATFCLSQRAEHIWEGVSSATTRSRPIINTRDEPHADAEKYRRLHVIVGDSNMCEATTMLKVGTASLVLEMIEAGVPFRDFSLDNPIRAIREVSHDLTGRRPVRLAGGRQASALDIQREYYSRAVEYLQSREPNTQIEQVVDLWGRQLDAVESQDFAKVDTEIDWVIKRKLFQRYQDRYNMELSDPKISQLDLAYHDIKRGRGVFDLLQRKGLAARITTDEEIDAAVTTPPQTTRAKLRGEFISAAQEAGRDFTVDWVHLKLNDQAQRTVLCKDPFRSVDERVKRLIASM.

Glutamate 9 provides a ligand contact to Mg(2+). Residue arginine 53 coordinates ATP. Tyrosine 55 contacts Mg(2+). Aspartate 57 acts as the Proton acceptor in catalysis. Glutamate 63 lines the Mg(2+) pocket. Positions 66 and 419 each coordinate ATP.

The protein belongs to the Pup ligase/Pup deamidase family. Pup-conjugating enzyme subfamily. In terms of processing, pupylated at an undetermined lysine residue by the prokaryotic ubiquitin-like protein Pup, which leads to its degradation by the proteasome and thereby constitutes a negative auto-regulation.

The enzyme catalyses ATP + [prokaryotic ubiquitin-like protein]-L-glutamate + [protein]-L-lysine = ADP + phosphate + N(6)-([prokaryotic ubiquitin-like protein]-gamma-L-glutamyl)-[protein]-L-lysine.. It functions in the pathway protein degradation; proteasomal Pup-dependent pathway. It participates in protein modification; protein pupylation. Its function is as follows. Catalyzes the covalent attachment of the prokaryotic ubiquitin-like protein modifier Pup to the proteasomal substrate proteins, thereby targeting them for proteasomal degradation. This tagging system is termed pupylation. The ligation reaction likely involves the side-chain carboxylate of the C-terminal glutamate of Pup and the side-chain amino group of a substrate lysine. The chain is Pup--protein ligase (pafA) from Mycolicibacterium smegmatis (strain ATCC 700084 / mc(2)155) (Mycobacterium smegmatis).